Reading from the N-terminus, the 255-residue chain is 14-3-3 protein 5 (255 aa).

This sequence belongs to the 14-3-3 family. In terms of assembly, homodimer.

The polypeptide is 14-3-3 protein 5 (TFT5) (Solanum lycopersicum (Tomato)).